We begin with the raw amino-acid sequence, 79 residues long: ATP synthase subunit c (79 aa).

Transmembrane regions (helical) follow at residues 11 to 31 (MAAA…IGIL) and 53 to 73 (FFIV…LGLY).

Belongs to the ATPase C chain family. As to quaternary structure, F-type ATPases have 2 components, F(1) - the catalytic core - and F(0) - the membrane proton channel. F(1) has five subunits: alpha(3), beta(3), gamma(1), delta(1), epsilon(1). F(0) has three main subunits: a(1), b(2) and c(10-14). The alpha and beta chains form an alternating ring which encloses part of the gamma chain. F(1) is attached to F(0) by a central stalk formed by the gamma and epsilon chains, while a peripheral stalk is formed by the delta and b chains.

Its subcellular location is the cell inner membrane. In terms of biological role, f(1)F(0) ATP synthase produces ATP from ADP in the presence of a proton or sodium gradient. F-type ATPases consist of two structural domains, F(1) containing the extramembraneous catalytic core and F(0) containing the membrane proton channel, linked together by a central stalk and a peripheral stalk. During catalysis, ATP synthesis in the catalytic domain of F(1) is coupled via a rotary mechanism of the central stalk subunits to proton translocation. Its function is as follows. Key component of the F(0) channel; it plays a direct role in translocation across the membrane. A homomeric c-ring of between 10-14 subunits forms the central stalk rotor element with the F(1) delta and epsilon subunits. This is ATP synthase subunit c from Proteus mirabilis (strain HI4320).